The chain runs to 387 residues: 3-ketoacyl-CoA thiolase (387 aa).

C91 serves as the catalytic Acyl-thioester intermediate. Residues H343 and C373 each act as proton acceptor in the active site.

It belongs to the thiolase-like superfamily. Thiolase family. In terms of assembly, heterotetramer of two alpha chains (FadB) and two beta chains (FadA).

It localises to the cytoplasm. It carries out the reaction an acyl-CoA + acetyl-CoA = a 3-oxoacyl-CoA + CoA. Its pathway is lipid metabolism; fatty acid beta-oxidation. In terms of biological role, catalyzes the final step of fatty acid oxidation in which acetyl-CoA is released and the CoA ester of a fatty acid two carbons shorter is formed. The protein is 3-ketoacyl-CoA thiolase of Shewanella baltica (strain OS155 / ATCC BAA-1091).